Consider the following 318-residue polypeptide: UDP-N-acetylenolpyruvoylglucosamine reductase (318 aa).

In terms of domain architecture, FAD-binding PCMH-type spans 38–204; it reads IGGVCPVIVE…LGIEILLKEG (167 aa). R182 is an active-site residue. Over residues 212 to 229 the composition is skewed to basic and acidic residues; it reads SLKDKRDRRNSSQPENKK. Positions 212–232 are disordered; the sequence is SLKDKRDRRNSSQPENKKSAG. The active-site Proton donor is S233. E310 is a catalytic residue.

The protein belongs to the MurB family. Requires FAD as cofactor.

Its subcellular location is the cytoplasm. It catalyses the reaction UDP-N-acetyl-alpha-D-muramate + NADP(+) = UDP-N-acetyl-3-O-(1-carboxyvinyl)-alpha-D-glucosamine + NADPH + H(+). The protein operates within cell wall biogenesis; peptidoglycan biosynthesis. Functionally, cell wall formation. In Leptospira interrogans serogroup Icterohaemorrhagiae serovar copenhageni (strain Fiocruz L1-130), this protein is UDP-N-acetylenolpyruvoylglucosamine reductase.